The chain runs to 484 residues: Putative myrosinase 6 (484 aa).

Asn-28 carries an N-linked (GlcNAc...) asparagine glycan. A beta-D-glucoside contacts are provided by residues Gln-39, His-140, and 184–185 (NQ). Residues Cys-204 and Cys-207 are joined by a disulfide bond. N-linked (GlcNAc...) asparagine glycosylation occurs at Asn-260. A beta-D-glucoside is bound by residues Tyr-321, Trp-440, 447–448 (EF), and Phe-456. An N-linked (GlcNAc...) asparagine glycan is attached at Asn-462.

This sequence belongs to the glycosyl hydrolase 1 family.

The enzyme catalyses a thioglucoside + H2O = a sugar + a thiol.. This Arabidopsis thaliana (Mouse-ear cress) protein is Putative myrosinase 6.